The primary structure comprises 438 residues: UPF0229 protein NGR_c12350 (438 aa).

Over residues methionine 1 to leucine 16 the composition is skewed to basic and acidic residues. 2 disordered regions span residues methionine 1–glutamine 20 and phenylalanine 83–glutamine 107. The span at serine 94–threonine 105 shows a compositional bias: gly residues.

Belongs to the UPF0229 family.

This Sinorhizobium fredii (strain NBRC 101917 / NGR234) protein is UPF0229 protein NGR_c12350.